A 511-amino-acid polypeptide reads, in one-letter code: 2-isopropylmalate synthase (511 aa).

Residues 5–267 (LIVFDTTLRD…DTNVDISQIV (263 aa)) enclose the Pyruvate carboxyltransferase domain. Mn(2+) contacts are provided by Asp-14, His-202, His-204, and Asn-238. The interval 393–511 (KLSWLKVVSE…YPVERAYPQV (119 aa)) is regulatory domain.

The protein belongs to the alpha-IPM synthase/homocitrate synthase family. LeuA type 1 subfamily. Homodimer. Mn(2+) is required as a cofactor.

Its subcellular location is the cytoplasm. It catalyses the reaction 3-methyl-2-oxobutanoate + acetyl-CoA + H2O = (2S)-2-isopropylmalate + CoA + H(+). It participates in amino-acid biosynthesis; L-leucine biosynthesis; L-leucine from 3-methyl-2-oxobutanoate: step 1/4. Its function is as follows. Catalyzes the condensation of the acetyl group of acetyl-CoA with 3-methyl-2-oxobutanoate (2-ketoisovalerate) to form 3-carboxy-3-hydroxy-4-methylpentanoate (2-isopropylmalate). The chain is 2-isopropylmalate synthase from Nitrosococcus oceani (strain ATCC 19707 / BCRC 17464 / JCM 30415 / NCIMB 11848 / C-107).